Reading from the N-terminus, the 542-residue chain is CTP synthase (542 aa).

Residues 1–265 form an amidoligase domain region; the sequence is MTRYIFVTGG…DEIIVERFGL (265 aa). Ser13 serves as a coordination point for CTP. Ser13 lines the UTP pocket. ATP is bound by residues 14 to 19 and Asp71; that span reads SLGKGI. Asp71 and Glu139 together coordinate Mg(2+). Residues 146–148, 186–191, and Lys222 each bind CTP; these read DIE and KTKPTQ. Residues 186-191 and Lys222 each bind UTP; that span reads KTKPTQ. Positions 290 to 541 constitute a Glutamine amidotransferase type-1 domain; it reads TIAMVGKYME…VRAALENAGG (252 aa). Gly351 lines the L-glutamine pocket. The active-site Nucleophile; for glutamine hydrolysis is Cys378. Residues 379-382, Glu402, and Arg469 each bind L-glutamine; that span reads LGLQ. Residues His514 and Glu516 contribute to the active site.

The protein belongs to the CTP synthase family. In terms of assembly, homotetramer.

The enzyme catalyses UTP + L-glutamine + ATP + H2O = CTP + L-glutamate + ADP + phosphate + 2 H(+). The catalysed reaction is L-glutamine + H2O = L-glutamate + NH4(+). It carries out the reaction UTP + NH4(+) + ATP = CTP + ADP + phosphate + 2 H(+). It participates in pyrimidine metabolism; CTP biosynthesis via de novo pathway; CTP from UDP: step 2/2. Its activity is regulated as follows. Allosterically activated by GTP, when glutamine is the substrate; GTP has no effect on the reaction when ammonia is the substrate. The allosteric effector GTP functions by stabilizing the protein conformation that binds the tetrahedral intermediate(s) formed during glutamine hydrolysis. Inhibited by the product CTP, via allosteric rather than competitive inhibition. Functionally, catalyzes the ATP-dependent amination of UTP to CTP with either L-glutamine or ammonia as the source of nitrogen. Regulates intracellular CTP levels through interactions with the four ribonucleotide triphosphates. In Hahella chejuensis (strain KCTC 2396), this protein is CTP synthase.